Consider the following 497-residue polypeptide: Signal recognition particle subunit SRP54 1 (497 aa).

The G-domain stretch occupies residues 1–295 (MVLAQLGGSI…DVKPFVSRLL (295 aa)). GTP-binding positions include 108-115 (GLQGSGKT), 190-194 (DTSGR), and 248-251 (TKLD). An M-domain region spans residues 296-497 (GMGDLSGLMD…MLGGMGLGGD (202 aa)).

This sequence belongs to the GTP-binding SRP family. SRP54 subfamily. As to quaternary structure, component of a signal recognition particle (SRP) complex that consists of a 7SL RNA molecule of 300 nucleotides and six protein subunits: SRP72, SRP68, SRP54, SRP19, SRP14 and SRP9.

It localises to the cytoplasm. It is found in the endoplasmic reticulum. It carries out the reaction GTP + H2O = GDP + phosphate + H(+). Its function is as follows. Component of the signal recognition particle (SRP) complex, a ribonucleoprotein complex that mediates the cotranslational targeting of secretory and membrane proteins to the endoplasmic reticulum (ER). As part of the SRP complex, associates with the SRP receptor (SR) component SRPRA to target secretory proteins to the endoplasmic reticulum membrane. Binds to the signal sequence of presecretory proteins when they emerge from the ribosomes. Displays basal GTPase activity, and stimulates reciprocal GTPase activation of the SR subunit SRPRA. Forms a guanosine 5'-triphosphate (GTP)-dependent complex with the SR subunit SRPRA. SR compaction and GTPase mediated rearrangement of SR drive SRP-mediated cotranslational protein translocation into the ER. Requires the presence of SRP9/SRP14 and/or SRP19 to stably interact with RNA. The protein is Signal recognition particle subunit SRP54 1 (SRP54-1) of Hordeum vulgare (Barley).